The following is a 633-amino-acid chain: 1-deoxy-D-xylulose-5-phosphate synthase (633 aa).

The interval 1 to 22 is disordered; it reads MPTTFHEIPRKRPTTPLLDRAQ. Thiamine diphosphate-binding positions include H87 and 128 to 130; that span reads GHS. D159 serves as a coordination point for Mg(2+). Residues 160 to 161, N188, F295, and E378 each bind thiamine diphosphate; that span reads GA. N188 lines the Mg(2+) pocket.

This sequence belongs to the transketolase family. DXPS subfamily. Homodimer. Mg(2+) is required as a cofactor. The cofactor is thiamine diphosphate.

It carries out the reaction D-glyceraldehyde 3-phosphate + pyruvate + H(+) = 1-deoxy-D-xylulose 5-phosphate + CO2. It functions in the pathway metabolic intermediate biosynthesis; 1-deoxy-D-xylulose 5-phosphate biosynthesis; 1-deoxy-D-xylulose 5-phosphate from D-glyceraldehyde 3-phosphate and pyruvate: step 1/1. Its function is as follows. Catalyzes the acyloin condensation reaction between C atoms 2 and 3 of pyruvate and glyceraldehyde 3-phosphate to yield 1-deoxy-D-xylulose-5-phosphate (DXP). This Pseudomonas fluorescens (strain ATCC BAA-477 / NRRL B-23932 / Pf-5) protein is 1-deoxy-D-xylulose-5-phosphate synthase.